A 95-amino-acid chain; its full sequence is Large ribosomal subunit protein bL27 (95 aa).

The propeptide occupies 1 to 9; it reads MLNMNLQFF.

This sequence belongs to the bacterial ribosomal protein bL27 family. The N-terminus is cleaved by ribosomal processing cysteine protease Prp.

The protein is Large ribosomal subunit protein bL27 of Agathobacter rectalis (strain ATCC 33656 / DSM 3377 / JCM 17463 / KCTC 5835 / VPI 0990) (Eubacterium rectale).